A 459-amino-acid chain; its full sequence is Argininosuccinate lyase (459 aa).

Belongs to the lyase 1 family. Argininosuccinate lyase subfamily.

The protein resides in the cytoplasm. It catalyses the reaction 2-(N(omega)-L-arginino)succinate = fumarate + L-arginine. Its pathway is amino-acid biosynthesis; L-arginine biosynthesis; L-arginine from L-ornithine and carbamoyl phosphate: step 3/3. The sequence is that of Argininosuccinate lyase from Staphylococcus aureus (strain MRSA252).